A 232-amino-acid polypeptide reads, in one-letter code: Aliphatic sulfonates import ATP-binding protein SsuB 2 (232 aa).

Residues M1–A216 form the ABC transporter domain. G33–S40 provides a ligand contact to ATP.

It belongs to the ABC transporter superfamily. Aliphatic sulfonates importer (TC 3.A.1.17.2) family. The complex is composed of two ATP-binding proteins (SsuB), two transmembrane proteins (SsuC) and a solute-binding protein (SsuA).

Its subcellular location is the cell inner membrane. It carries out the reaction ATP + H2O + aliphatic sulfonate-[sulfonate-binding protein]Side 1 = ADP + phosphate + aliphatic sulfonateSide 2 + [sulfonate-binding protein]Side 1.. Part of the ABC transporter complex SsuABC involved in aliphatic sulfonates import. Responsible for energy coupling to the transport system. In Pseudomonas syringae pv. tomato (strain ATCC BAA-871 / DC3000), this protein is Aliphatic sulfonates import ATP-binding protein SsuB 2.